The following is a 281-amino-acid chain: NADPH-dependent 7-cyano-7-deazaguanine reductase (281 aa).

87–89 (VES) contributes to the substrate binding site. 89-90 (SK) is an NADPH binding site. Catalysis depends on Cys-188, which acts as the Thioimide intermediate. Asp-195 (proton donor) is an active-site residue. 227 to 228 (HE) lines the substrate pocket. 256–257 (RG) is a binding site for NADPH.

It belongs to the GTP cyclohydrolase I family. QueF type 2 subfamily. In terms of assembly, homodimer.

Its subcellular location is the cytoplasm. It catalyses the reaction 7-aminomethyl-7-carbaguanine + 2 NADP(+) = 7-cyano-7-deazaguanine + 2 NADPH + 3 H(+). It functions in the pathway tRNA modification; tRNA-queuosine biosynthesis. Functionally, catalyzes the NADPH-dependent reduction of 7-cyano-7-deazaguanine (preQ0) to 7-aminomethyl-7-deazaguanine (preQ1). The chain is NADPH-dependent 7-cyano-7-deazaguanine reductase from Aliivibrio salmonicida (strain LFI1238) (Vibrio salmonicida (strain LFI1238)).